The following is a 417-amino-acid chain: NADP-specific glutamate dehydrogenase A1 (417 aa).

Lys105 is a catalytic residue.

Belongs to the Glu/Leu/Phe/Val dehydrogenases family. In terms of assembly, homohexamer.

The catalysed reaction is L-glutamate + NADP(+) + H2O = 2-oxoglutarate + NH4(+) + NADPH + H(+). This chain is NADP-specific glutamate dehydrogenase A1 (gdhA1), found in Halobacterium salinarum (Halobacterium halobium).